The primary structure comprises 79 residues: Small ribosomal subunit protein bS18 (79 aa).

Belongs to the bacterial ribosomal protein bS18 family. In terms of assembly, part of the 30S ribosomal subunit. Forms a tight heterodimer with protein bS6.

Functionally, binds as a heterodimer with protein bS6 to the central domain of the 16S rRNA, where it helps stabilize the platform of the 30S subunit. In Streptococcus pyogenes serotype M5 (strain Manfredo), this protein is Small ribosomal subunit protein bS18.